Reading from the N-terminus, the 189-residue chain is Putative manganese efflux pump MntP (189 aa).

Helical transmembrane passes span 8–28, 39–59, 65–85, 106–126, 131–151, and 166–186; these read FLSL…GFSI, IALF…SAGL, ISSF…GKMI, LTTL…GLSV, ILLA…IGVF, and IVGG…HLGF.

The protein belongs to the MntP (TC 9.B.29) family.

It is found in the cell inner membrane. Probably functions as a manganese efflux pump. This Gloeothece citriformis (strain PCC 7424) (Cyanothece sp. (strain PCC 7424)) protein is Putative manganese efflux pump MntP.